Reading from the N-terminus, the 122-residue chain is Large ribosomal subunit protein bL12 (122 aa).

It belongs to the bacterial ribosomal protein bL12 family. As to quaternary structure, homodimer. Part of the ribosomal stalk of the 50S ribosomal subunit. Forms a multimeric L10(L12)X complex, where L10 forms an elongated spine to which 2 to 4 L12 dimers bind in a sequential fashion. Binds GTP-bound translation factors.

Forms part of the ribosomal stalk which helps the ribosome interact with GTP-bound translation factors. Is thus essential for accurate translation. The chain is Large ribosomal subunit protein bL12 from Shewanella denitrificans (strain OS217 / ATCC BAA-1090 / DSM 15013).